Consider the following 206-residue polypeptide: Phosphoheptose isomerase (206 aa).

Residues 37 to 195 (LVDAFKAGKK…IEQKMDINNE (159 aa)) form the SIS domain. 52 to 54 (NGG) is a substrate binding site. H61 and E65 together coordinate Zn(2+). Substrate contacts are provided by residues E65, 93 to 94 (ND), 119 to 121 (STS), S124, and Q172. Residues Q172 and H180 each contribute to the Zn(2+) site.

Belongs to the SIS family. GmhA subfamily. As to quaternary structure, homotetramer. Zn(2+) serves as cofactor.

The protein resides in the cytoplasm. It catalyses the reaction 2 D-sedoheptulose 7-phosphate = D-glycero-alpha-D-manno-heptose 7-phosphate + D-glycero-beta-D-manno-heptose 7-phosphate. Its pathway is carbohydrate biosynthesis; D-glycero-D-manno-heptose 7-phosphate biosynthesis; D-glycero-alpha-D-manno-heptose 7-phosphate and D-glycero-beta-D-manno-heptose 7-phosphate from sedoheptulose 7-phosphate: step 1/1. Catalyzes the isomerization of sedoheptulose 7-phosphate in D-glycero-D-manno-heptose 7-phosphate. The protein is Phosphoheptose isomerase of Hamiltonella defensa subsp. Acyrthosiphon pisum (strain 5AT).